A 124-amino-acid chain; its full sequence is Large ribosomal subunit protein bL20 (124 aa).

This sequence belongs to the bacterial ribosomal protein bL20 family.

In terms of biological role, binds directly to 23S ribosomal RNA and is necessary for the in vitro assembly process of the 50S ribosomal subunit. It is not involved in the protein synthesizing functions of that subunit. The polypeptide is Large ribosomal subunit protein bL20 (Ehrlichia canis (strain Jake)).